Here is a 302-residue protein sequence, read N- to C-terminus: RNA polymerase II holoenzyme cyclin-like subunit (302 aa).

One can recognise a Cyclin N-terminal domain in the interval 53–142; sequence QQLIKLGKRM…LGECEFSLIS (90 aa).

The protein belongs to the cyclin family. Cyclin C subfamily. Component of the srb8-11 complex, a regulatory module of the Mediator complex.

It is found in the nucleus. Component of the srb8-11 complex. The srb8-11 complex is a regulatory module of the Mediator complex which is itself involved in regulation of basal and activated RNA polymerase II-dependent transcription. The srb8-11 complex may be involved in the transcriptional repression of a subset of genes regulated by Mediator. It may inhibit the association of the Mediator complex with RNA polymerase II to form the holoenzyme complex. The srb8-11 complex phosphorylates the C-terminal domain (CTD) of the largest subunit of RNA polymerase II. The polypeptide is RNA polymerase II holoenzyme cyclin-like subunit (ssn8) (Aspergillus fumigatus (strain ATCC MYA-4609 / CBS 101355 / FGSC A1100 / Af293) (Neosartorya fumigata)).